A 641-amino-acid polypeptide reads, in one-letter code: WW domain-binding protein 11 (641 aa).

Residues 1-11 (MGRRSTSSTKS) show a composition bias toward polar residues. The tract at residues 1 to 37 (MGRRSTSSTKSGKFMNPTDQARKEARKRELKKNKKQR) is disordered. A required for nuclear import region spans residues 1-45 (MGRRSTSSTKSGKFMNPTDQARKEARKRELKKNKKQRMMVRAAVL). Lysine 13 is subject to N6-acetyllysine. Positions 28–37 (RELKKNKKQR) are enriched in basic residues. Positions 75–133 (EKVLKDKRKKLRETFERILRLYEKENPDIYKELRKLEVEYEQKRAQLSQYFDAVKNAQH) form a coiled coil. The residue at position 181 (serine 181) is a Phosphoserine. Residues 186–213 (LGHGVPRLPPGRKPPGPPPGPPPPQVLQ) form a disordered region. Arginine 192 is subject to Omega-N-methylarginine. The span at 192 to 210 (RLPPGRKPPGPPPGPPPPQ) shows a compositional bias: pro residues. An interaction with PP1 region spans residues 217–221 (RKVGF). Phosphotyrosine is present on tyrosine 236. A disordered region spans residues 236-549 (YSPELAQRGH…LIQRPKADDA (314 aa)). Residue serine 237 is modified to Phosphoserine. Residues 253-263 (SEDDGYPEDMD) are compositionally biased toward acidic residues. Basic and acidic residues predominate over residues 276-304 (TDRSDAESDGDEFGHRDDSERDNTEEKKS). Serine 279 and serine 283 each carry phosphoserine. The interval 306–310 (LSVRF) is interaction with PP1. The segment covering 351–365 (EFSEEEDDDDSEDSE) has biased composition (acidic residues). 3 positions are modified to phosphoserine: serine 353, serine 361, and serine 364. Residues 366 to 380 (AEKPSQKQHKEDSHA) show a composition bias toward basic and acidic residues. Positions 381-404 (DGSSAASSQQQAPPQAVPPSQIQA) are enriched in low complexity. Pro residues-rich tracts occupy residues 405–447 (PPMP…PPGM), 456–504 (RLLP…PPRP), and 510–530 (PLVP…PLPN). The short motif at 455-466 (PRLLPPGPPPGR) is the PGR element. Lysine 557 is covalently cross-linked (Glycyl lysine isopeptide (Lys-Gly) (interchain with G-Cter in SUMO2)). Position 565 is an N6-acetyllysine (lysine 565). Lysine 572 is covalently cross-linked (Glycyl lysine isopeptide (Lys-Gly) (interchain with G-Cter in SUMO2)). The disordered stretch occupies residues 588-623 (ENKGATAVPQRRSEEDSAVPVAKAAPRSGPSVPVSV). The residue at position 600 (serine 600) is a Phosphoserine.

Interacts with PPP1CA, PPP1CB and PPP1CC. Interacts via the PGR motif with PQBP1 in the nucleus. Interacts with the WW domains of WBP4.

It is found in the nucleus. It localises to the cytoplasm. Its function is as follows. Activates pre-mRNA splicing. May inhibit PP1 phosphatase activity. This is WW domain-binding protein 11 (Wbp11) from Rattus norvegicus (Rat).